The chain runs to 228 residues: L-ribulose-5-phosphate 4-epimerase UlaF (228 aa).

Substrate-binding positions include 26–27, 43–44, and 72–73; these read GN, SG, and SS. Zn(2+) contacts are provided by aspartate 74, histidine 93, and histidine 95. Residue aspartate 118 is the Proton donor/acceptor of the active site. Histidine 167 is a Zn(2+) binding site. The active-site Proton donor/acceptor is tyrosine 225.

Belongs to the aldolase class II family. AraD/FucA subfamily. Zn(2+) serves as cofactor.

The enzyme catalyses L-ribulose 5-phosphate = D-xylulose 5-phosphate. It functions in the pathway cofactor degradation; L-ascorbate degradation; D-xylulose 5-phosphate from L-ascorbate: step 4/4. Functionally, catalyzes the isomerization of L-ribulose 5-phosphate to D-xylulose 5-phosphate. Is involved in the anaerobic L-ascorbate utilization. This chain is L-ribulose-5-phosphate 4-epimerase UlaF, found in Escherichia coli (strain SE11).